Consider the following 291-residue polypeptide: Formamidopyrimidine-DNA glycosylase (291 aa).

Residue proline 2 is the Schiff-base intermediate with DNA of the active site. Glutamate 3 (proton donor) is an active-site residue. Residue lysine 60 is the Proton donor; for beta-elimination activity of the active site. DNA contacts are provided by histidine 97, arginine 116, and arginine 161. An FPG-type zinc finger spans residues 246–280; the sequence is WVYNRAGEPCRVCGMPIQRIRLAGRSSHFCSECQT. Arginine 270 acts as the Proton donor; for delta-elimination activity in catalysis.

Belongs to the FPG family. Monomer. Requires Zn(2+) as cofactor.

The catalysed reaction is Hydrolysis of DNA containing ring-opened 7-methylguanine residues, releasing 2,6-diamino-4-hydroxy-5-(N-methyl)formamidopyrimidine.. It catalyses the reaction 2'-deoxyribonucleotide-(2'-deoxyribose 5'-phosphate)-2'-deoxyribonucleotide-DNA = a 3'-end 2'-deoxyribonucleotide-(2,3-dehydro-2,3-deoxyribose 5'-phosphate)-DNA + a 5'-end 5'-phospho-2'-deoxyribonucleoside-DNA + H(+). In terms of biological role, involved in base excision repair of DNA damaged by oxidation or by mutagenic agents. Acts as a DNA glycosylase that recognizes and removes damaged bases. Has a preference for oxidized purines, such as 7,8-dihydro-8-oxoguanine (8-oxoG). Has AP (apurinic/apyrimidinic) lyase activity and introduces nicks in the DNA strand. Cleaves the DNA backbone by beta-delta elimination to generate a single-strand break at the site of the removed base with both 3'- and 5'-phosphates. In Nostoc punctiforme (strain ATCC 29133 / PCC 73102), this protein is Formamidopyrimidine-DNA glycosylase.